The primary structure comprises 96 residues: UPF0235 protein VCM66_0443 (96 aa).

This sequence belongs to the UPF0235 family.

This Vibrio cholerae serotype O1 (strain M66-2) protein is UPF0235 protein VCM66_0443.